A 78-amino-acid polypeptide reads, in one-letter code: Hainantoxin-XX.3 (78 aa).

The first 23 residues, 1–23 (MKSATLLALSFLLIASCFLICEA), serve as a signal peptide directing secretion. Positions 24–47 (EHSRYEEHEILEENMGDVVNLEQR) are excised as a propeptide. 3 cysteine pairs are disulfide-bonded: Cys49–Cys62, Cys56–Cys66, and Cys61–Cys77.

Belongs to the hainantoxin family. 20 subfamily. In terms of tissue distribution, expressed by the venom gland.

It localises to the secreted. Functionally, putative ion channel inhibitor. This is Hainantoxin-XX.3 from Cyriopagopus hainanus (Chinese bird spider).